Reading from the N-terminus, the 497-residue chain is Probable cytosol aminopeptidase (497 aa).

2 residues coordinate Mn(2+): K263 and D268. The active site involves K275. Mn(2+) contacts are provided by D286, D345, and E347. The active site involves R349.

Belongs to the peptidase M17 family. Mn(2+) is required as a cofactor.

The protein localises to the cytoplasm. It carries out the reaction Release of an N-terminal amino acid, Xaa-|-Yaa-, in which Xaa is preferably Leu, but may be other amino acids including Pro although not Arg or Lys, and Yaa may be Pro. Amino acid amides and methyl esters are also readily hydrolyzed, but rates on arylamides are exceedingly low.. The catalysed reaction is Release of an N-terminal amino acid, preferentially leucine, but not glutamic or aspartic acids.. Functionally, presumably involved in the processing and regular turnover of intracellular proteins. Catalyzes the removal of unsubstituted N-terminal amino acids from various peptides. In Brucella ovis (strain ATCC 25840 / 63/290 / NCTC 10512), this protein is Probable cytosol aminopeptidase.